The sequence spans 574 residues: Septation ring formation regulator EzrA (574 aa).

Residues 1-7 (MSSGIIL) are Extracellular-facing. A helical transmembrane segment spans residues 8-26 (LIVAIVLLVIIAYLIGVII). Over 27–574 (RKRNDSMIGT…YERTREHIRF (548 aa)) the chain is Cytoplasmic. 3 coiled-coil regions span residues 102-140 (NFIR…QEEK), 243-379 (RRLL…GQEI), and 459-520 (QLEA…SFEA).

Belongs to the EzrA family.

The protein localises to the cell membrane. In terms of biological role, negative regulator of FtsZ ring formation; modulates the frequency and position of FtsZ ring formation. Inhibits FtsZ ring formation at polar sites. Interacts either with FtsZ or with one of its binding partners to promote depolymerization. In Streptococcus uberis (strain ATCC BAA-854 / 0140J), this protein is Septation ring formation regulator EzrA.